The chain runs to 170 residues: Protein-export protein SecB (170 aa).

Belongs to the SecB family. In terms of assembly, homotetramer, a dimer of dimers. One homotetramer interacts with 1 SecA dimer.

It localises to the cytoplasm. In terms of biological role, one of the proteins required for the normal export of preproteins out of the cell cytoplasm. It is a molecular chaperone that binds to a subset of precursor proteins, maintaining them in a translocation-competent state. It also specifically binds to its receptor SecA. The polypeptide is Protein-export protein SecB (Xanthomonas axonopodis pv. citri (strain 306)).